Here is a 521-residue protein sequence, read N- to C-terminus: MARTSSLMVTSEAFPLAKSGGLGDAVTGLARALSRAGVDTGILMPAYRGVLDRVVGIRHIAHLAGMPGGEATLVGALCPESGLPFYLLCNPGLYDRDGLYLDEQGQPYADNAVRFAALAHAAMRVAAGLPGMRRPDILHAQDWHAGLVPLLVRAAGLRYVKTVLTVHNLAFQGSFELECAGQIGVPGAYCTDDGARLHGRINFMKAGLRYADRITTVSRNYAREIMTPEFGCGLDPLLRARAADLAPIPNGIDDALWNPASDPHLGHLCYSARNPARKSRAKAALQKAFGLHPDQGAALLAMGSRLTSQKMADVAVEALPDALHRHPSLQVAIIGRGERQYEIELEALAARYPGRCAVRIGYDETTAHRLHAGADMLLHGSRFEPFGLTPLYAMRYGAVPIASRVGGMADTIVDPGEREGSQAMLAATGILFDGDGAPDMGHAIDRALRLYAQPAIWRSMQRNGMACEFGWNTAAQPYLDLFENMVDAPRRGRVPAPTIRPAPLPAYARSSLDGMPAPAAY.

Lys-18 provides a ligand contact to ADP-alpha-D-glucose.

Belongs to the glycosyltransferase 1 family. Bacterial/plant glycogen synthase subfamily.

The catalysed reaction is [(1-&gt;4)-alpha-D-glucosyl](n) + ADP-alpha-D-glucose = [(1-&gt;4)-alpha-D-glucosyl](n+1) + ADP + H(+). Its pathway is glycan biosynthesis; glycogen biosynthesis. In terms of biological role, synthesizes alpha-1,4-glucan chains using ADP-glucose. In Bordetella petrii (strain ATCC BAA-461 / DSM 12804 / CCUG 43448), this protein is Glycogen synthase.